The primary structure comprises 236 residues: MSVSSLLQPNTYNINSKSQSLSNTPSNPTSQTNTLWSNNAYNPPHLMFGSSDLNNGTGPSGPKGDKGDPGSKGETGSQGIKGDPGVKGTTGGTIGSGTYFSGDLPSYVTTGGTETSIPEVSTGTVSFTTKTLGGNCNYSSGVFTTTETAAFYVAVTYIGTSVGSLSGSLTLSIFKNGGTAVYNTLVSYSGAGIQMSASLNGIIEMTPSDNIFIGFVNSGGEIQPNASGFTLNIFRI.

The span at 1–17 shows a compositional bias: polar residues; sequence MSVSSLLQPNTYNINSK. A disordered region spans residues 1 to 94; it reads MSVSSLLQPN…GVKGTTGGTI (94 aa). The span at 18–35 shows a compositional bias: low complexity; the sequence is SQSLSNTPSNPTSQTNTL. One can recognise a Collagen-like domain in the interval 58–91; that stretch reads GPSGPKGDKGDPGSKGETGSQGIKGDPGVKGTTG.

This sequence belongs to the sputnik virus V6 family.

This is an uncharacterized protein from Sputnik virophage.